Consider the following 160-residue polypeptide: 2-C-methyl-D-erythritol 2,4-cyclodiphosphate synthase (160 aa).

D10 and H12 together coordinate a divalent metal cation. 4-CDP-2-C-methyl-D-erythritol 2-phosphate is bound by residues 10 to 12 (DVH) and 36 to 37 (HS). H44 is an a divalent metal cation binding site. 4-CDP-2-C-methyl-D-erythritol 2-phosphate-binding positions include 58-60 (DIG), 63-67 (FPDTD), 102-108 (AQAPKMA), 134-137 (TTTE), F141, and R144.

Belongs to the IspF family. As to quaternary structure, homotrimer. Requires a divalent metal cation as cofactor.

The enzyme catalyses 4-CDP-2-C-methyl-D-erythritol 2-phosphate = 2-C-methyl-D-erythritol 2,4-cyclic diphosphate + CMP. It functions in the pathway isoprenoid biosynthesis; isopentenyl diphosphate biosynthesis via DXP pathway; isopentenyl diphosphate from 1-deoxy-D-xylulose 5-phosphate: step 4/6. Involved in the biosynthesis of isopentenyl diphosphate (IPP) and dimethylallyl diphosphate (DMAPP), two major building blocks of isoprenoid compounds. Catalyzes the conversion of 4-diphosphocytidyl-2-C-methyl-D-erythritol 2-phosphate (CDP-ME2P) to 2-C-methyl-D-erythritol 2,4-cyclodiphosphate (ME-CPP) with a corresponding release of cytidine 5-monophosphate (CMP). The protein is 2-C-methyl-D-erythritol 2,4-cyclodiphosphate synthase of Shewanella denitrificans (strain OS217 / ATCC BAA-1090 / DSM 15013).